A 207-amino-acid chain; its full sequence is Infectivity protein P11 (207 aa).

The chain crosses the membrane as a helical span at residues 13-28; the sequence is WWIVAAIGGLAAFLLL. The stretch at 64–95 forms a coiled coil; sequence AALQANTQLSAQNAQLQAQMDASRLQLETQLN.

The protein localises to the virion membrane. Component of the phage ejection machinery. Pilot protein for the formation of the tube that conducts the genome into the target cell. Probably involved in penetration of the bacterial outer membrane and for making the peptidoglycan layer accessible to the viral transglycosylase. Essential for viral infectivity. The protein is Infectivity protein P11 (XI) of Enterobacteria phage PRD1 (Bacteriophage PRD1).